We begin with the raw amino-acid sequence, 333 residues long: Glycerol-3-phosphate dehydrogenase [NAD(P)+] (333 aa).

NADPH is bound by residues tryptophan 13, lysine 33, and lysine 108. Positions 108 and 138 each coordinate sn-glycerol 3-phosphate. Position 142 (serine 142) interacts with NADPH. Sn-glycerol 3-phosphate contacts are provided by lysine 193, aspartate 246, serine 256, arginine 257, and asparagine 258. The active-site Proton acceptor is the lysine 193. Arginine 257 is an NADPH binding site. NADPH-binding residues include valine 281 and glutamate 283.

This sequence belongs to the NAD-dependent glycerol-3-phosphate dehydrogenase family.

The protein resides in the cytoplasm. It catalyses the reaction sn-glycerol 3-phosphate + NAD(+) = dihydroxyacetone phosphate + NADH + H(+). It carries out the reaction sn-glycerol 3-phosphate + NADP(+) = dihydroxyacetone phosphate + NADPH + H(+). The protein operates within membrane lipid metabolism; glycerophospholipid metabolism. Its function is as follows. Catalyzes the reduction of the glycolytic intermediate dihydroxyacetone phosphate (DHAP) to sn-glycerol 3-phosphate (G3P), the key precursor for phospholipid synthesis. The polypeptide is Glycerol-3-phosphate dehydrogenase [NAD(P)+] (Bifidobacterium longum subsp. infantis (strain ATCC 15697 / DSM 20088 / JCM 1222 / NCTC 11817 / S12)).